A 535-amino-acid polypeptide reads, in one-letter code: Beta-glucosidase 47 (535 aa).

A signal peptide spans 1–38 (MKKSIVYEIMETKSSMYLSQFRLWLCFIITTLVSLSSS). Gln-73 lines the a beta-D-glucoside pocket. Asn-93 carries N-linked (GlcNAc...) asparagine glycosylation. Residues His-175 and 220-221 (NE) each bind a beta-D-glucoside. Glu-221 serves as the catalytic Proton donor. Cys-240 and Cys-247 form a disulfide bridge. Asn-246 carries an N-linked (GlcNAc...) asparagine glycan. Tyr-363 is a binding site for a beta-D-glucoside. A disulfide bond links Cys-371 and Cys-376. Residue Asn-419 is glycosylated (N-linked (GlcNAc...) asparagine). Position 426 (Glu-426) interacts with a beta-D-glucoside. Glu-426 (nucleophile) is an active-site residue. Asn-432 carries an N-linked (GlcNAc...) asparagine glycan. Residues Trp-470, 477–478 (EW), and Phe-486 contribute to the a beta-D-glucoside site.

This sequence belongs to the glycosyl hydrolase 1 family.

It carries out the reaction Hydrolysis of terminal, non-reducing beta-D-glucosyl residues with release of beta-D-glucose.. The protein is Beta-glucosidase 47 of Arabidopsis thaliana (Mouse-ear cress).